Consider the following 788-residue polypeptide: Protein HHLF1 (788 aa).

Disordered regions lie at residues 1–82 (MAQR…NFWH), 366–385 (TGTAAGTTSPPAASGTETEA), and 609–663 (IHKK…SRLP). Residues 16–25 (RGRGAGGPSG) show a composition bias toward gly residues. Positions 26–56 (VGSSPPSSCVPMGAPSTAGTGASAAATTTPG) are enriched in low complexity. Residues 74–248 (SGNNSNFWHG…HGAGEVVRLY (175 aa)) are RNA-binding. The span at 650 to 659 (LRRDDEDWKP) shows a compositional bias: basic and acidic residues. Residues 671 to 788 (LDETFWVLGS…IATHYHYNAQ (118 aa)) are interaction with host EIF2AK2/PKR.

Belongs to the herpesviridae US22 family. Interacts with host EIF2AK2/PKR; this interaction retains EIF2AK2 to the host nucleus and prevents its activation. Interaction (via N-terminus) with host BECN1; this interaction inhibits host autophagy. Interacts with the viral DNA polymerase accessory subunit UL44. Interacts with host HSPA5.

The protein localises to the virion. Its subcellular location is the host cytoplasm. The protein resides in the host nucleus. In terms of biological role, inhibits the establishment of the antiviral state and the integrated stress response (ISR) in the infected cell. Prevents the phosphorylation of the host eukaryotic translation initiation factor eIF-2alpha/EIF2S1 and thus the shutoff of viral and cellular protein synthesis by directly interacting with EIF2AK2/PKR. Prevents stress granule formation in response to eIF-2alpha/EIF2S1 phosphorylation, thereby rescuing viral replication and protein synthesis. Also inhibits host autophagy by interacting with host Beclin-1/BECN1. The protein is Protein HHLF1 (TRS1) of Homo sapiens (Human).